Consider the following 1007-residue polypeptide: Integrator complex subunit 8 (1007 aa).

Positions 19-24 (WFEFLL) match the WFEF motif motif. Polar residues predominate over residues 56–78 (TAQESVGTPGSDLQNLNQTPSNS). The interval 56 to 112 (TAQESVGTPGSDLQNLNQTPSNSGPIPGVVGGAPAPTTPTASGGVGMPHSPQRPAEK) is disordered. The segment covering 79-97 (GPIPGVVGGAPAPTTPTAS) has biased composition (low complexity).

Belongs to the Integrator subunit 8 family. As to quaternary structure, belongs to the multiprotein complex Integrator, at least composed of IntS1, IntS2, IntS3, IntS4, omd/IntS5, IntS6, defl/IntS7, IntS8, IntS9, IntS10, IntS11, IntS12, asun/IntS13, IntS14 and IntS15. The core complex associates with protein phosphatase 2A subunits mts/PP2A and Pp2A-29B, to form the Integrator-PP2A (INTAC) complex.

It localises to the nucleus. Its subcellular location is the chromosome. In terms of biological role, component of the integrator complex, a multiprotein complex that terminates RNA polymerase II (Pol II) transcription in the promoter-proximal region of genes. The integrator complex provides a quality checkpoint during transcription elongation by driving premature transcription termination of transcripts that are unfavorably configured for transcriptional elongation: the complex terminates transcription by (1) catalyzing dephosphorylation of the C-terminal domain (CTD) of Pol II subunit Polr2A/Rbp1 and Spt5, and (2) degrading the exiting nascent RNA transcript via endonuclease activity. The integrator complex is also involved in the 3'-end processing of the U7 snRNA, and also the spliceosomal snRNAs U1, U2, U4 and U5. Within the integrator complex, INTS8 is required for the recruitment of protein phosphatase 2A (PP2A) to transcription pause-release checkpoint. In Drosophila melanogaster (Fruit fly), this protein is Integrator complex subunit 8.